A 560-amino-acid chain; its full sequence is Putative transport protein VV1438 (560 aa).

Helical transmembrane passes span 5–25 (VVLLLQQNPILLIFVVLAIGL), 37–57 (LGNSIGVLITSLIMGHLGFSF), 66–86 (FMLFIYCVGIEAGPNFFGIFF), 91–111 (HYFTLSMVVLVTAVSISYFAS), and 164–184 (VGYAMAYLVGLISMIMFAKLL). RCK C-terminal domains are found at residues 203-292 (RGLG…FRNG) and 293-376 (KEVF…RIGF). Helical transmembrane passes span 386-406 (LLAFCSFFILGIMFGLVTMTF), 409-429 (VSFSLGNAVGLLLSGITLGFL), 443-463 (ALNMVKDLGLMIFMVGIGLSA), 478-498 (IIGIAFLVSVVPVFFAYLVGA), 506-526 (ALLFGAIIGARTCAPAMDIVN), and 539-559 (AGTYAIANILMTLAGTILIIL).

This sequence belongs to the AAE transporter (TC 2.A.81) family. YbjL subfamily.

It localises to the cell membrane. This is Putative transport protein VV1438 from Vibrio vulnificus (strain YJ016).